Reading from the N-terminus, the 120-residue chain is Large ribosomal subunit protein uL18 (120 aa).

The disordered stretch occupies residues 1–25 (MKQTRTAARQSRHQRIRRKVKGTSD). Basic residues predominate over residues 10 to 21 (QSRHQRIRRKVK).

This sequence belongs to the universal ribosomal protein uL18 family. As to quaternary structure, part of the 50S ribosomal subunit; part of the 5S rRNA/L5/L18/L25 subcomplex. Contacts the 5S and 23S rRNAs.

In terms of biological role, this is one of the proteins that bind and probably mediate the attachment of the 5S RNA into the large ribosomal subunit, where it forms part of the central protuberance. This chain is Large ribosomal subunit protein uL18, found in Thermosynechococcus vestitus (strain NIES-2133 / IAM M-273 / BP-1).